The sequence spans 252 residues: Serine/threonine phosphatase stp (252 aa).

A disordered region spans residues 1-22 (MHAEFRTDRGRIRHHNEDNGGV). The 241-residue stretch at 2-242 (HAEFRTDRGR…DNITVLLVER (241 aa)) folds into the PPM-type phosphatase domain. Residues D36, G37, D194, and D233 each coordinate Mn(2+).

This sequence belongs to the PP2C family. Requires Mn(2+) as cofactor.

Its subcellular location is the cytoplasm. The protein resides in the membrane. The enzyme catalyses O-phospho-L-seryl-[protein] + H2O = L-seryl-[protein] + phosphate. The catalysed reaction is O-phospho-L-threonyl-[protein] + H2O = L-threonyl-[protein] + phosphate. In terms of biological role, protein phosphatase that dephosphorylates EF-Tu. The polypeptide is Serine/threonine phosphatase stp (stp) (Listeria innocua serovar 6a (strain ATCC BAA-680 / CLIP 11262)).